The following is a 378-amino-acid chain: Erythronate-4-phosphate dehydrogenase (378 aa).

The substrate site is built by serine 45 and threonine 66. Residues aspartate 146 and threonine 175 each coordinate NAD(+). Arginine 208 is an active-site residue. Aspartate 232 provides a ligand contact to NAD(+). Residue glutamate 237 is part of the active site. The active-site Proton donor is the histidine 254. NAD(+) is bound at residue glycine 257. Substrate is bound at residue tyrosine 258.

This sequence belongs to the D-isomer specific 2-hydroxyacid dehydrogenase family. PdxB subfamily. As to quaternary structure, homodimer.

It is found in the cytoplasm. It catalyses the reaction 4-phospho-D-erythronate + NAD(+) = (R)-3-hydroxy-2-oxo-4-phosphooxybutanoate + NADH + H(+). The protein operates within cofactor biosynthesis; pyridoxine 5'-phosphate biosynthesis; pyridoxine 5'-phosphate from D-erythrose 4-phosphate: step 2/5. Functionally, catalyzes the oxidation of erythronate-4-phosphate to 3-hydroxy-2-oxo-4-phosphonooxybutanoate. The polypeptide is Erythronate-4-phosphate dehydrogenase (Escherichia coli O7:K1 (strain IAI39 / ExPEC)).